The primary structure comprises 312 residues: MIEFEKPKITKFDESENYGKFVVEPLERGYGTTLGNSLRRVLLSSLPGAAVTSIQIEGVQHEFATIPGVREDVIQIVLAVKGIAIKSYVESEKQIELDVTGPMDVTAGDILTDSDIEIVNKDHYLFSIAEGHSMRAVMTVKKGYGYVPDDENKVDGAPIGTIAVDSIYTPVSKVNYQVEPARVGGDSSYDKLTLEITTNGTIVSDEALSLSAKILTDHLNLFVDLSEVAAEAETLVVKDEVKTERVLDKIIEEMDFSVRAYNGLKRAGINTVADIVEMSEADMIKVKNLGHKSVEEVKVKLTELGLSLKKRK.

Positions 1 to 226 are alpha N-terminal domain (alpha-NTD); that stretch reads MIEFEKPKIT…DHLNLFVDLS (226 aa). The interval 243-312 is alpha C-terminal domain (alpha-CTD); sequence TERVLDKIIE…ELGLSLKKRK (70 aa).

This sequence belongs to the RNA polymerase alpha chain family. In terms of assembly, homodimer. The RNAP catalytic core consists of 2 alpha, 1 beta, 1 beta' and 1 omega subunit. When a sigma factor is associated with the core the holoenzyme is formed, which can initiate transcription.

The enzyme catalyses RNA(n) + a ribonucleoside 5'-triphosphate = RNA(n+1) + diphosphate. DNA-dependent RNA polymerase catalyzes the transcription of DNA into RNA using the four ribonucleoside triphosphates as substrates. The polypeptide is DNA-directed RNA polymerase subunit alpha (Lactococcus lactis subsp. lactis (strain IL1403) (Streptococcus lactis)).